The chain runs to 300 residues: Pantoate kinase (300 aa).

This sequence belongs to the GHMP kinase family. PoK subfamily. Homodimer.

It catalyses the reaction (R)-pantoate + ATP = (R)-4-phosphopantoate + ADP + H(+). Its pathway is cofactor biosynthesis; coenzyme A biosynthesis. With respect to regulation, moderately stimulated in the presence of potassium cations. Inhibited by increasing concentrations of pantoate. Activity is not affected by CoA/acetyl-CoA. Phosphorylates (R)-pantoate to form (R)-4-phosphopantoate in the CoA biosynthesis pathway. Displays broad nucleotide specificity and utilizes ATP, GTP, UTP, and CTP with comparable catalytic efficiencies. The polypeptide is Pantoate kinase (Thermococcus kodakarensis (strain ATCC BAA-918 / JCM 12380 / KOD1) (Pyrococcus kodakaraensis (strain KOD1))).